The following is a 598-amino-acid chain: F-box/WD repeat-containing protein 8 (598 aa).

Met1 bears the N-acetylmethionine mark. The disordered stretch occupies residues 17 to 93; the sequence is LAQAQAPKKR…RSPLAREGAG (77 aa). Over residues 29 to 40 the composition is skewed to basic and acidic residues; it reads PEAAERRARRPE. A compositionally biased stretch (low complexity) spans 61 to 71; that stretch reads EGAGRPPAARA. Ser83 and Ser85 each carry phosphoserine. Residues 113 to 159 enclose the F-box domain; sequence PFFDIQLPYELAINIFQYLDRKELGRCAQVSKTWKVIAEDEVLWYRL. 8 WD repeats span residues 201–250, 259–299, 300–340, 341–383, 384–429, 430–475, 476–513, and 514–561; these read AVSE…LESE, QPNV…FEHD, ARIQ…AEFE, VPKL…LLYA, HGPP…LKLG, NVLR…SAHQ, LRVSAVQMDDWKIVSGGEEGLVSVWDYRMNQKLWEVYS, and GHPV…AYEF.

In terms of assembly, component of the Cul7-RING(FBXW8) complex consisting of CUL7, RBX1, SKP1 and FBXW8; within the complex interacts with CUL7 and SKP1. Interacts with GLMN isoform 1. Interacts with OBSL1, CUL1, CUL2, CCT6B, PFDN5, CCT2, CCT3, CCT6A, CCT7, VBP1, CCDC8, ARF1, TRIP13, PDCD5 and GORASP1. Interacts with MAP4K1/HPK1 (when autophosphorylated). Associated component of the 3M complex. Interacts with POUF51 (when phosphorylated on 'Ser-355'). Post-translationally, phosphorylation at Ser-85 by mTORC2 promotes FBXW8 stabilization, allowing its translocation to the cytosol in response to insulin.

The protein resides in the cytoplasm. It is found in the perinuclear region. The protein localises to the golgi apparatus. It functions in the pathway protein modification; protein ubiquitination. Functionally, substrate-recognition component of the Cul7-RING(FBXW8) ubiquitin ligase complex, which mediates the ubiquitination and subsequent proteasomal degradation of target proteins. The Cul7-RING(FBXW8) complex mediates ubiquitination and consequent degradation of GORASP1, acting as a component of the ubiquitin ligase pathway that regulates Golgi morphogenesis and dendrite patterning in brain. Mediates ubiquitination and degradation of IRS1 in a mTOR-dependent manner: the Cul7-RING(FBXW8) complex recognizes and binds IRS1 previously phosphorylated by S6 kinase (RPS6KB1 or RPS6KB2). The Cul7-RING(FBXW8) complex also mediates ubiquitination of MAP4K1/HPK1: recognizes and binds autophosphorylated MAP4K1/HPK1, leading to its degradation, thereby affecting cell proliferation and differentiation. The Cul7-RING(FBXW8) complex also mediates ubiquitination of phosphorylated cyclin-D1 (CCND1). The Cul7-RING(FBXW8) complex is however not a major regulator of CCND1 stability during the G1/S transition. Associated component of the 3M complex, suggesting that it mediates some of 3M complex functions. In Homo sapiens (Human), this protein is F-box/WD repeat-containing protein 8.